The chain runs to 187 residues: Large ribosomal subunit protein uL5 (187 aa).

The protein belongs to the universal ribosomal protein uL5 family. In terms of assembly, part of the 50S ribosomal subunit; part of the 5S rRNA/L5/L18/L25 subcomplex. Contacts the 5S rRNA and the P site tRNA. Forms a bridge to the 30S subunit in the 70S ribosome.

This is one of the proteins that bind and probably mediate the attachment of the 5S RNA into the large ribosomal subunit, where it forms part of the central protuberance. In the 70S ribosome it contacts protein S13 of the 30S subunit (bridge B1b), connecting the 2 subunits; this bridge is implicated in subunit movement. Contacts the P site tRNA; the 5S rRNA and some of its associated proteins might help stabilize positioning of ribosome-bound tRNAs. This Mycolicibacterium paratuberculosis (strain ATCC BAA-968 / K-10) (Mycobacterium paratuberculosis) protein is Large ribosomal subunit protein uL5.